A 785-amino-acid chain; its full sequence is Rho GTPase-activating protein 10 (785 aa).

The BAR domain occupies 7–262 (EFSDCYLDSP…IRQNPKDHKR (256 aa)). The 108-residue stretch at 265–372 (QFTAEGYLYV…WLEVLGGKEA (108 aa)) folds into the PH domain. The 186-residue stretch at 389–574 (AQLDKMGFTI…ILIENHEKIF (186 aa)) folds into the Rho-GAP domain. The disordered stretch occupies residues 576–708 (TPPDATLPEP…PAVTPPSPKL (133 aa)). Pro residues predominate over residues 584–595 (EPGPLSAPPNAP). Basic residues predominate over residues 598 to 608 (QSKRQGQRTKR). The segment covering 622 to 632 (GDRPSLPKEDT) has biased composition (basic and acidic residues). The segment covering 633–650 (PPSSLDSLSSPSPTTATA) has biased composition (low complexity). Positions 675 to 697 (APSQARSSAVQWLNPQSPTTPSC) are enriched in polar residues. The SH3 domain occupies 727–785 (IISRKARAVYPCEAEHSSELSFEIGAIFEDVQTSREPGWLEGTLNGKRGLIPQNYVKLL).

In terms of assembly, interacts with PKN3. Interacts with caspase-activated PAK2 proteolytic fragment PAK-2p34; the interaction does not affect ARHGAP10 GTPase activation activity towards RHOA and CDC42. Interacts via its SH3 domain with PTK2/FAK1. Interacts with PTK2B/PYK2; the interaction negatively regulates ARHGAP10 GTPase-activating activity. Interacts with MICAL1 and WDR44; complex formation might transit from GRAF2/ARHGAP10-MICAL1 to GRAF2/ARHGAP10-WDR44 complexes.

It is found in the cytoplasm. The protein localises to the perinuclear region. The protein resides in the cell membrane. It localises to the endosome membrane. In terms of biological role, GTPase-activating protein that catalyzes the conversion of active GTP-bound Rho GTPases to their inactive GDP-bound form, thus suppressing various Rho GTPase-mediated cellular processes. Also converts Cdc42 to an inactive GDP-bound state. Essential for PTKB2 regulation of cytoskeletal organization via Rho family GTPases. Inhibits PAK2 proteolytic fragment PAK-2p34 kinase activity and changes its localization from the nucleus to the perinuclear region. Stabilizes PAK-2p34 thereby increasing stimulation of cell death. Associates with MICAL1 on the endosomal membrane to promote Rab8-Rab10-dependent tubule extension. After dissociation with MICAL1, recruits WDR44 which connects the endoplasmic reticulum (ER) with the endosomal tubule, thereby participating in the export of a subset of neosynthesized proteins. In Bos taurus (Bovine), this protein is Rho GTPase-activating protein 10 (ARHGAP10).